Here is a 56-residue protein sequence, read N- to C-terminus: Cytochrome b-c1 complex subunit 10 (56 aa).

The Mitochondrial matrix portion of the chain corresponds to 1 to 12 (MLTRFLGPRYRQ). A helical membrane pass occupies residues 13–35 (LARNWVPTASLWGAVGAVGLVWA). Residues 36-56 (TDWRLILDWVPYINGKFKKDD) are Mitochondrial intermembrane-facing.

Belongs to the UQCR11/QCR10 family. In terms of assembly, component of the ubiquinol-cytochrome c oxidoreductase (cytochrome b-c1 complex, complex III, CIII), a multisubunit enzyme composed of 11 subunits. The complex is composed of 3 respiratory subunits cytochrome b, cytochrome c1 and Rieske protein UQCRFS1, 2 core protein subunits UQCRC1/QCR1 and UQCRC2/QCR2, and 6 low-molecular weight protein subunits UQCRH/QCR6, UQCRB/QCR7, UQCRQ/QCR8, UQCR10/QCR9, UQCR11/QCR10 and subunit 9, the cleavage product of Rieske protein UQCRFS1. The complex exists as an obligatory dimer and forms supercomplexes (SCs) in the inner mitochondrial membrane with NADH-ubiquinone oxidoreductase (complex I, CI) and cytochrome c oxidase (complex IV, CIV), resulting in different assemblies (supercomplex SCI(1)III(2)IV(1) and megacomplex MCI(2)III(2)IV(2)).

The protein resides in the mitochondrion inner membrane. Component of the ubiquinol-cytochrome c oxidoreductase, a multisubunit transmembrane complex that is part of the mitochondrial electron transport chain which drives oxidative phosphorylation. The respiratory chain contains 3 multisubunit complexes succinate dehydrogenase (complex II, CII), ubiquinol-cytochrome c oxidoreductase (cytochrome b-c1 complex, complex III, CIII) and cytochrome c oxidase (complex IV, CIV), that cooperate to transfer electrons derived from NADH and succinate to molecular oxygen, creating an electrochemical gradient over the inner membrane that drives transmembrane transport and the ATP synthase. The cytochrome b-c1 complex catalyzes electron transfer from ubiquinol to cytochrome c, linking this redox reaction to translocation of protons across the mitochondrial inner membrane, with protons being carried across the membrane as hydrogens on the quinol. In the process called Q cycle, 2 protons are consumed from the matrix, 4 protons are released into the intermembrane space and 2 electrons are passed to cytochrome c. QCR10 has a role in CIII assembly and RIP1 stability. The protein is Cytochrome b-c1 complex subunit 10 (UQCR11) of Bos taurus (Bovine).